The following is a 330-amino-acid chain: MADIIARLREDGIQKRVIQEGRGALPDFQDGTKATFHYRTLCSDEEGAVLDDSRVRGKPMELIIGKKFKLPVWETIVRTMREGEIAQFCCDXKHVVLYPLVAKSLRNIAAGKDPLEGQRHCCGIAQMHXHSSLGHADLDALQQNPQPLIFDIEMLKVENPGTYQQDPWAMTDEEKAKAVPVIHQEGNRLYREGHVKEAAAKYYDAIACLKNLQMKEQPGSPDWIQLDQQITPLLLNYCQCKLVAEEYYEVLDHCSSILNKYDDNVKAYFKRGKAHAAVWNAQQAQDDFAKVLQLDPAMAPVVSRELRALEARIRQKDEEDKARFRGIFSH.

S43 carries the post-translational modification Phosphoserine. A PPIase FKBP-type domain is found at 54–146 (RVRGKPMELI…DLDALQQNPQ (93 aa)). TPR repeat units follow at residues 179 to 212 (VPVI…LKNL), 231 to 264 (TPLL…YDDN), and 265 to 298 (VKAY…DPAM).

As to quaternary structure, interacts with RET in the pituitary gland; this interaction prevents the formation of the AIP-survivin complex.

The protein localises to the cytoplasm. In terms of biological role, may play a positive role in AHR-mediated (aromatic hydrocarbon receptor) signaling, possibly by influencing its receptivity for ligand and/or its nuclear targeting. The protein is AH receptor-interacting protein (AIP) of Bos taurus (Bovine).